The following is a 141-amino-acid chain: Hemoglobin subunit alpha (141 aa).

The Globin domain maps to 1–141; it reads VLSPADKTNI…VSTVLTSKYR (141 aa). Serine 3 carries the phosphoserine modification. N6-succinyllysine is present on lysine 7. Position 8 is a phosphothreonine (threonine 8). An N6-succinyllysine modification is found at lysine 11. Lysine 16 carries the N6-acetyllysine; alternate modification. At lysine 16 the chain carries N6-succinyllysine; alternate. Tyrosine 24 carries the post-translational modification Phosphotyrosine. A Phosphoserine modification is found at serine 35. At lysine 40 the chain carries N6-succinyllysine. At serine 49 the chain carries Phosphoserine. Position 58 (histidine 58) interacts with O2. Histidine 87 serves as a coordination point for heme b. Serine 102 is modified (phosphoserine). Threonine 108 carries the phosphothreonine modification. Serine 124 is modified (phosphoserine). Phosphothreonine is present on residues threonine 134 and threonine 137. Serine 138 is modified (phosphoserine).

This sequence belongs to the globin family. Heterotetramer of two alpha chains and two beta chains. As to expression, red blood cells.

Its function is as follows. Involved in oxygen transport from the lung to the various peripheral tissues. In terms of biological role, hemopressin acts as an antagonist peptide of the cannabinoid receptor CNR1. Hemopressin-binding efficiently blocks cannabinoid receptor CNR1 and subsequent signaling. The sequence is that of Hemoglobin subunit alpha (HBA) from Canis lupus familiaris (Dog).